The primary structure comprises 376 residues: D-alanine--D-alanine ligase (376 aa).

An ATP-grasp domain is found at 155 to 361 (KIIFEKAGIP…YPELIEKLID (207 aa)). An ATP-binding site is contributed by 188-243 (EEKFSYPVFVKPSNAGSSVGVSKAHDKNELKEALIYAARYDRKVLIEEFINGREVE). Positions 314, 328, and 330 each coordinate Mg(2+).

Belongs to the D-alanine--D-alanine ligase family. Mg(2+) is required as a cofactor. It depends on Mn(2+) as a cofactor.

Its subcellular location is the cytoplasm. It carries out the reaction 2 D-alanine + ATP = D-alanyl-D-alanine + ADP + phosphate + H(+). Its pathway is cell wall biogenesis; peptidoglycan biosynthesis. Its function is as follows. Cell wall formation. This is D-alanine--D-alanine ligase from Acetivibrio thermocellus (strain ATCC 27405 / DSM 1237 / JCM 9322 / NBRC 103400 / NCIMB 10682 / NRRL B-4536 / VPI 7372) (Clostridium thermocellum).